A 473-amino-acid polypeptide reads, in one-letter code: ATP synthase subunit beta (473 aa).

158–165 provides a ligand contact to ATP; sequence GGAGVGKT.

Belongs to the ATPase alpha/beta chains family. In terms of assembly, F-type ATPases have 2 components, CF(1) - the catalytic core - and CF(0) - the membrane proton channel. CF(1) has five subunits: alpha(3), beta(3), gamma(1), delta(1), epsilon(1). CF(0) has three main subunits: a(1), b(2) and c(9-12). The alpha and beta chains form an alternating ring which encloses part of the gamma chain. CF(1) is attached to CF(0) by a central stalk formed by the gamma and epsilon chains, while a peripheral stalk is formed by the delta and b chains.

The protein resides in the cell membrane. The enzyme catalyses ATP + H2O + 4 H(+)(in) = ADP + phosphate + 5 H(+)(out). Produces ATP from ADP in the presence of a proton gradient across the membrane. The catalytic sites are hosted primarily by the beta subunits. This Geobacillus thermodenitrificans (strain NG80-2) protein is ATP synthase subunit beta.